The sequence spans 676 residues: Envelope glycoprotein (676 aa).

A signal peptide spans 1–32; sequence MGVTGILQLPRDRFKRTSFFLWVIILFQRTFS. Residues 33 to 650 are Extracellular-facing; that stretch reads IPLGVIHNST…NDNWWTGWRQ (618 aa). An N-linked (GlcNAc...) asparagine; by host glycan is attached at asparagine 40. 5 disulfides stabilise this stretch: cysteine 53–cysteine 609, cysteine 108–cysteine 135, cysteine 121–cysteine 147, cysteine 511–cysteine 556, and cysteine 601–cysteine 608. Positions 54–201 are receptor-binding; sequence RDKLSSTNQL…DFFSSHPLRE (148 aa). Asparagine 204, asparagine 228, asparagine 238, asparagine 257, asparagine 268, asparagine 296, asparagine 317, asparagine 333, asparagine 346, asparagine 386, and asparagine 413 each carry an N-linked (GlcNAc...) asparagine; by host glycan. Residues 305–485 form a mucin-like region region; the sequence is ELSFTVVSNG…SGKLGLITNT (181 aa). Residues 315-335 are compositionally biased toward polar residues; the sequence is AKNISGQSPARTSSDPGTNTT. The disordered stretch occupies residues 315 to 337; sequence AKNISGQSPARTSSDPGTNTTTE. Polar residues predominate over residues 373 to 391; that stretch reads TSPQSLTTKPGPDNSTHNT. Disordered stretches follow at residues 373-392 and 402-479; these read TSPQ…HNTP and TQVE…SGKL. Over residues 414 to 432 the composition is skewed to low complexity; the sequence is DSTASDTPSATTAAGPPKA. Positions 433-464 are enriched in polar residues; it reads ENTNTSKSTDFLDPATTTSPQNHSETAGNNNT. 3 N-linked (GlcNAc...) asparagine; by host glycosylation sites follow: asparagine 436, asparagine 454, and asparagine 462. The tract at residues 524 to 539 is fusion peptide; it reads GAAIGLAWIPYFGPAA. Positions 554–595 form a coiled coil; that stretch reads LICGLRQLANETTQALQLFLRATTELRTFSILNRKAIDFLLQ. The N-linked (GlcNAc...) asparagine; by host glycan is linked to asparagine 563. Residues 615 to 634 are a coiled coil; that stretch reads WTKNITDKIDQIIHDFVDKT. Asparagine 618 carries N-linked (GlcNAc...) asparagine; by host glycosylation. The chain crosses the membrane as a helical span at residues 651–671; that stretch reads WIPAGIGVTGVIIAVIALFCI. Residues cysteine 670 and cysteine 672 are each lipidated (S-palmitoyl cysteine; by host). Residues 672–676 lie on the Cytoplasmic side of the membrane; sequence CKFVF.

The protein belongs to the filoviruses glycoprotein family. In terms of assembly, homotrimer; each monomer consists of a GP1 and a GP2 subunit linked by disulfide bonds. The resulting peplomers (GP1,2) protrude from the virus surface as spikes. Interacts with host integrin alpha-V/ITGAV. Interacts with host CLEC10A. Binds also to host CD209 and CLEC4M/DC-SIGN(R). Interacts with host FOLR1. Interacts with BST2; this interaction inhibits the antiviral effect of BST2 and this allows viral release from infected cells. Interacts with host FCN1; this interaction enhances viral entry. Interacts with host TLR4; this interaction induces cell death in T-lymphocytes or proinflammatory cytokines and SOCS1 production in monocytes. As to quaternary structure, interacts with host entry receptor NPC1. GP1 and GP2delta are part of GP1,2delta soluble complexes released by ectodomain shedding. Post-translationally, the signal peptide region modulates GP's high mannose glycosylation, thereby determining the efficiency of the interactions with DC-SIGN(R). N-glycosylated. In terms of processing, O-glycosylated in the mucin-like region. Post-translationally, palmitoylation of GP2 is not required for its function. Specific enzymatic cleavages in vivo yield mature proteins. The precursor is processed into GP1 and GP2 by host cell furin in the trans Golgi, and maybe by other host proteases, to yield the mature GP1 and GP2 proteins. The cleavage site corresponds to the furin optimal cleavage sequence [KR]-X-[KR]-R. This cleavage does not seem to be required for function. After the internalization of the virus into cell endosomes, GP1 C-terminus is removed by the endosomal proteases cathepsin B, cathepsin L, or both, leaving a 19-kDa N-terminal fragment which is further digested by cathepsin B. Proteolytic processing of GP1,2 by host ADAM17 can remove the transmembrane anchor of GP2 and leads to shedding of complexes consisting in GP1 and truncated GP2 (GP1,2delta).

It localises to the virion membrane. Its subcellular location is the host cell membrane. The protein localises to the secreted. In terms of biological role, trimeric GP1,2 complexes form the virion surface spikes and mediate the viral entry processes, with GP1 acting as the receptor-binding subunit and GP2 as the membrane fusion subunit. At later times of infection, down-regulates the expression of various host cell surface molecules that are essential for immune surveillance and cell adhesion. Down-modulates several integrins including ITGA1, ITGA2, ITGA3, ITGA4, ITGA5, ITGA6, ITGAV and ITGB1. This decrease in cell adhesion molecules may lead to cell detachment, contributing to the disruption of blood vessel integrity and hemorrhages developed during infection (cytotoxicity). Interacts with host TLR4 and thereby stimulates the differentiation and activation of monocytes leading to bystander death of T-lymphocytes. Down-regulates as well the function of host natural killer cells. Counteracts the antiviral effect of host BST2/tetherin that restricts release of progeny virions from infected cells. However, cooperates with VP40 and host BST2 to activate canonical NF-kappa-B pathway in a manner dependent on neddylation. Functions as a decoy for anti-GP1,2 antibodies thereby contributing to viral immune evasion. Interacts and activates host macrophages and dendritic cells inducing up-regulation of cytokine transcription. This effect is mediated throught activation of host TLR4. Its function is as follows. Responsible for binding to the receptor(s) on target cells. Interacts with CD209/DC-SIGN and CLEC4M/DC-SIGNR which act as cofactors for virus entry into dendritic cells (DCs) and endothelial cells. Binding to the macrophage specific lectin CLEC10A also seems to enhance virus infectivity. Interaction with FOLR1/folate receptor alpha may be a cofactor for virus entry in some cell types, although results are contradictory. Members of the Tyro3 receptor tyrosine kinase family also seem to be cell entry factors in filovirus infection. Once attached, the virions are internalized through clathrin-dependent endocytosis and/or macropinocytosis. After internalization of the virus into the endosomes of the host cell, proteolysis of GP1 by two cysteine proteases, CTSB/cathepsin B and CTSL/cathepsin L removes the glycan cap and allows GP1 binding to the host entry receptor NPC1. NPC1-binding, Ca(2+) and acidic pH induce a conformational change of GP2, which unmasks its fusion peptide and permit membranes fusion. Functionally, acts as a class I viral fusion protein. Under the current model, the protein has at least 3 conformational states: pre-fusion native state, pre-hairpin intermediate state, and post-fusion hairpin state. During viral and target cell membrane fusion, the coiled coil regions (heptad repeats) assume a trimer-of-hairpins structure, positioning the fusion peptide in close proximity to the C-terminal region of the ectodomain. The formation of this structure appears to drive apposition and subsequent fusion of viral and target cell membranes. Responsible for penetration of the virus into the cell cytoplasm by mediating the fusion of the membrane of the endocytosed virus particle with the endosomal membrane. Low pH in endosomes induces an irreversible conformational change in GP2, releasing the fusion hydrophobic peptide. The sequence is that of Envelope glycoprotein (GP) from Epomops franqueti (Franquet's epauletted fruit bat).